A 546-amino-acid chain; its full sequence is Smad protein daf-8 (546 aa).

The MH1 domain occupies 16–137 (AMAQKVLEET…YRWVELPTCQ (122 aa)). Disordered regions lie at residues 234–268 (LQQSNRQDDEEPGYYRSGLSSPASHAASPREFIPN) and 292–317 (ENFSSENNGNRKPTYADGRPITPIEP). Over residues 292-302 (ENFSSENNGNR) the composition is skewed to polar residues. The region spanning 349-546 (WLKLIYYEEG…APPRICSSRT (198 aa)) is the MH2 domain.

Belongs to the dwarfin/SMAD family. In terms of assembly, homodimer. Interacts with R-SMAD daf-14 and co-SMAD daf-3. Interacts with orphan nuclear receptor nhr-69. Expressed in the excretory cell and gonadal distal tip cells (DTCs).

Its subcellular location is the cytoplasm. The protein localises to the nucleus. Its function is as follows. Probably a receptor-regulated SMAD (R-SMAD) that is an intracellular signal transducer and transcriptional modulator activated by TGF-beta-like daf-7 signaling. Plays a role in TGF-beta-like daf-7 signaling in regulating entry into a developmentally arrested larval state known as dauer, in response to harsh environmental conditions; partially redundant with R-SMAD daf-14. Plays a role in inhibiting mitosis and promoting a switch to meiosis in the germ line, perhaps by down-regulating lag-2 transcription in the gonadal distal tip cells (DTCs). In cooperation with orphan nuclear receptor nhr-69 modulates the Insulin/IGF-1-like signaling (IIS) pathway, perhaps by regulating expression of the potassium channel exp-2, which in turn modulates the secretion of the insulin-like peptide daf-28. The sequence is that of Smad protein daf-8 from Caenorhabditis elegans.